Here is a 2171-residue protein sequence, read N- to C-terminus: DExH-box ATP-dependent RNA helicase DExH12 (2171 aa).

Disordered stretches follow at residues 24–80, 218–267, and 383–426; these read SLVL…KERD, EENE…NEGT, and TAKE…ESGW. Composition is skewed to basic and acidic residues over residues 31–40 and 50–80; these read NRPRDTHEPT and IDPR…KERD. Acidic residues predominate over residues 218-242; that stretch reads EENEEDDEESDPDMVEEDDDEEDDE. Basic and acidic residues predominate over residues 383–423; the sequence is TAKEREENLQKSINEEARRLKDETGGDGGRGRRDVADRDSE. The Helicase ATP-binding 1 domain maps to 514-697; that stretch reads DTALFKAENI…FLRVDLKKGL (184 aa). 527 to 534 serves as a coordination point for ATP; sequence APTGAGKT. The DEIH box signature appears at 639–642; the sequence is DEIH. Residues 731–941 enclose the Helicase C-terminal 1 domain; it reads LCYQKVLAGA…GTVQNAREAC (211 aa). The 303-residue stretch at 1006 to 1308 folds into the SEC63 1 domain; it reads TDLGRIASYY…WLGSETVLPV (303 aa). The region spanning 1360–1537 is the Helicase ATP-binding 2 domain; sequence TVLYNTNDNV…WIGASSHGLF (178 aa). Position 1373 to 1380 (1373 to 1380) interacts with ATP; the sequence is APTGSGKT. A DELH box motif is present at residues 1479 to 1482; it reads DELH. The region spanning 1574–1779 is the Helicase C-terminal 2 domain; sequence AIVQHAKNKK…GVIENKQDAV (206 aa). The 319-residue stretch at 1839–2157 folds into the SEC63 2 domain; that stretch reads PLNLGMIASY…LGCDQEYSFS (319 aa).

It belongs to the DExH box helicase family. Interacts with CLO.

The protein resides in the nucleus. The catalysed reaction is ATP + H2O = ADP + phosphate + H(+). Its function is as follows. RNA helicase that plays an essential role in pre-mRNA splicing as component of the U5 snRNP and U4/U6-U5 tri-snRNP complexes. Involved in spliceosome assembly, activation and disassembly. The polypeptide is DExH-box ATP-dependent RNA helicase DExH12 (Arabidopsis thaliana (Mouse-ear cress)).